Here is a 370-residue protein sequence, read N- to C-terminus: DNA replication and repair protein RecF (370 aa).

Gly30–Thr37 contributes to the ATP binding site.

It belongs to the RecF family.

It localises to the cytoplasm. Functionally, the RecF protein is involved in DNA metabolism; it is required for DNA replication and normal SOS inducibility. RecF binds preferentially to single-stranded, linear DNA. It also seems to bind ATP. This is DNA replication and repair protein RecF from Listeria innocua serovar 6a (strain ATCC BAA-680 / CLIP 11262).